A 569-amino-acid chain; its full sequence is Isocitrate dehydrogenase kinase/phosphatase (569 aa).

ATP is bound by residues 316-322 and Lys-337; that span reads APGVRGM. Residue Asp-372 is part of the active site.

It belongs to the AceK family.

Its subcellular location is the cytoplasm. The catalysed reaction is L-seryl-[isocitrate dehydrogenase] + ATP = O-phospho-L-seryl-[isocitrate dehydrogenase] + ADP + H(+). Its function is as follows. Bifunctional enzyme which can phosphorylate or dephosphorylate isocitrate dehydrogenase (IDH) on a specific serine residue. This is a regulatory mechanism which enables bacteria to bypass the Krebs cycle via the glyoxylate shunt in response to the source of carbon. When bacteria are grown on glucose, IDH is fully active and unphosphorylated, but when grown on acetate or ethanol, the activity of IDH declines drastically concomitant with its phosphorylation. The polypeptide is Isocitrate dehydrogenase kinase/phosphatase (Pseudomonas putida (strain W619)).